The following is a 213-amino-acid chain: Thymidylate kinase (213 aa).

Residue 10 to 17 (GLEGAGKT) participates in ATP binding.

It belongs to the thymidylate kinase family.

The catalysed reaction is dTMP + ATP = dTDP + ADP. Phosphorylation of dTMP to form dTDP in both de novo and salvage pathways of dTTP synthesis. This Escherichia coli O1:K1 / APEC protein is Thymidylate kinase.